A 411-amino-acid polypeptide reads, in one-letter code: AT-hook motif nuclear-localized protein 14 (411 aa).

Disordered regions lie at residues 1–32 (MDPNESHHHHQQQQLHHLHQQQQQQQQQQRLT), 54–164 (ASTG…LGSV), 289–348 (KDAA…HQAG), and 366–411 (THSR…QIPD). The span at 7–19 (HHHHQQQQLHHLH) shows a compositional bias: basic residues. A compositionally biased stretch (low complexity) spans 20–29 (QQQQQQQQQQ). Residues 54–66 (ASTGNAVPSSNNG) are compositionally biased toward polar residues. A Bipartite nuclear localization signal motif is present at residues 105–113 (KRKRGRPRK). Residues 105 to 117 (KRKRGRPRKYVTP) constitute a DNA-binding region (a.T hook). Low complexity-rich tracts occupy residues 120–135 (ALAAKKLASSASSSSA) and 144–159 (VTGGTVSTNSGSSKKS). In terms of domain architecture, PPC spans 165 to 305 (GKTGQCFTPH…GKGDASNSGS (141 aa)). Residues 306–315 (RLTSPVSSGQ) are compositionally biased toward polar residues. Over residues 374–390 (RGGGNSGHDGRGGGGYD) the composition is skewed to gly residues.

It is found in the nucleus. Transcription factor that specifically binds AT-rich DNA sequences related to the nuclear matrix attachment regions (MARs). The sequence is that of AT-hook motif nuclear-localized protein 14 from Arabidopsis thaliana (Mouse-ear cress).